A 442-amino-acid polypeptide reads, in one-letter code: Ribosomal protein uS12 methylthiotransferase RimO (442 aa).

The region spanning 8–118 (PKVGFVSLGC…VLGHVHKYVA (111 aa)) is the MTTase N-terminal domain. C17, C53, C82, C150, C154, and C157 together coordinate [4Fe-4S] cluster. The 238-residue stretch at 136-373 (LTPRHYAYLK…MELQQQVSIR (238 aa)) folds into the Radical SAM core domain. The 67-residue stretch at 376 to 442 (ARKVGKEMTV…EYDLWASLIG (67 aa)) folds into the TRAM domain.

It belongs to the methylthiotransferase family. RimO subfamily. [4Fe-4S] cluster serves as cofactor.

It localises to the cytoplasm. The catalysed reaction is L-aspartate(89)-[ribosomal protein uS12]-hydrogen + (sulfur carrier)-SH + AH2 + 2 S-adenosyl-L-methionine = 3-methylsulfanyl-L-aspartate(89)-[ribosomal protein uS12]-hydrogen + (sulfur carrier)-H + 5'-deoxyadenosine + L-methionine + A + S-adenosyl-L-homocysteine + 2 H(+). Its function is as follows. Catalyzes the methylthiolation of an aspartic acid residue of ribosomal protein uS12. This Aeromonas salmonicida (strain A449) protein is Ribosomal protein uS12 methylthiotransferase RimO.